Reading from the N-terminus, the 117-residue chain is Class I hydrophobin 2 (117 aa).

The first 21 residues, 1 to 21, serve as a signal peptide directing secretion; that stretch reads EIVSLSLSLLAVVPLVVLVIA. Intrachain disulfides connect cysteine 35-cysteine 96, cysteine 42-cysteine 90, cysteine 43-cysteine 76, and cysteine 97-cysteine 110.

The protein belongs to the fungal hydrophobin family. In terms of assembly, self-assembles to form functional amyloid fibrils called rodlets. Self-assembly into fibrillar rodlets occurs spontaneously at hydrophobic:hydrophilic interfaces and the rodlets further associate laterally to form amphipathic monolayers.

The protein localises to the secreted. The protein resides in the cell wall. Functionally, aerial growth, conidiation, and dispersal of filamentous fungi in the environment rely upon a capability of their secreting small amphipathic proteins called hydrophobins (HPBs) with low sequence identity. Class I can self-assemble into an outermost layer of rodlet bundles on aerial cell surfaces, conferring cellular hydrophobicity that supports fungal growth, development and dispersal; whereas Class II form highly ordered films at water-air interfaces through intermolecular interactions but contribute nothing to the rodlet structure. In Pisolithus tinctorius (Dead man's foot), this protein is Class I hydrophobin 2.